Reading from the N-terminus, the 326-residue chain is MPPSISAFQAAYIGIEVLIALVSVPGNVLVIWAVKVNQALRDATFCFIVSLAVADVAVGALVIPLAILINIGPRTYFHTCLKVACPVLILTQSSILALLAIAVDRYLRVKIPLRYKTVVTPRRAVVAITGCWILSFVVGLTPMFGWNNLSAVERDWLANGSVGEPVIECQFEKVISMEYMVYFNFFVWVLPPLLLMVLIYMEVFYLIRKQLNKKVSASSGDPQKYYGKELKIAKSLALILFLFALSWLPLHILNCITLFCPSCHMPRILIYIAIFLSHGNSAMNPIVYAFRIQKFRVTFLKIWNDHFRCQPAPPVDEDAPAERPDD.

Residues 1-10 lie on the Extracellular side of the membrane; that stretch reads MPPSISAFQA. A helical membrane pass occupies residues 11 to 33; the sequence is AYIGIEVLIALVSVPGNVLVIWA. Residues 34 to 46 lie on the Cytoplasmic side of the membrane; the sequence is VKVNQALRDATFC. A helical transmembrane segment spans residues 47–69; that stretch reads FIVSLAVADVAVGALVIPLAILI. Residues 70–80 are Extracellular-facing; that stretch reads NIGPRTYFHTC. Cys80 and Cys169 are joined by a disulfide. The chain crosses the membrane as a helical span at residues 81-102; the sequence is LKVACPVLILTQSSILALLAIA. Residues 103 to 123 are Cytoplasmic-facing; it reads VDRYLRVKIPLRYKTVVTPRR. Residues 124–146 form a helical membrane-spanning segment; sequence AVVAITGCWILSFVVGLTPMFGW. Residues 147 to 176 lie on the Extracellular side of the membrane; sequence NNLSAVERDWLANGSVGEPVIECQFEKVIS. Asn148 and Asn159 each carry an N-linked (GlcNAc...) asparagine glycan. A helical transmembrane segment spans residues 177–201; the sequence is MEYMVYFNFFVWVLPPLLLMVLIYM. The Cytoplasmic portion of the chain corresponds to 202–235; it reads EVFYLIRKQLNKKVSASSGDPQKYYGKELKIAKS. Residues 236–259 traverse the membrane as a helical segment; that stretch reads LALILFLFALSWLPLHILNCITLF. At 260-267 the chain is on the extracellular side; the sequence is CPSCHMPR. A helical transmembrane segment spans residues 268–292; the sequence is ILIYIAIFLSHGNSAMNPIVYAFRI. Residues 293–326 are Cytoplasmic-facing; sequence QKFRVTFLKIWNDHFRCQPAPPVDEDAPAERPDD. Residue Cys309 is the site of S-palmitoyl cysteine attachment.

Belongs to the G-protein coupled receptor 1 family.

Its subcellular location is the cell membrane. In terms of biological role, receptor for adenosine. The activity of this receptor is mediated by G proteins which inhibit adenylyl cyclase. The polypeptide is Adenosine receptor A1 (ADORA1) (Bos taurus (Bovine)).